The primary structure comprises 751 residues: Cyanobacterial phytochrome B (751 aa).

C17 is an a tetrapyrrole binding site. The interval 22-511 (IHIPGLIQPH…RSAIIGIVLQ (490 aa)) is chromophore binding domain. In terms of domain architecture, GAF spans 152-320 (TTTEISQILA…MTSVEMSAKE (169 aa)). One can recognise a Histidine kinase domain in the interval 536–751 (IASHDLKEPL…STFYFTLQDV (216 aa)). At H539 the chain carries Phosphohistidine; by autocatalysis.

This sequence in the N-terminal section; belongs to the phytochrome family. In terms of processing, contains one covalently linked tetrapyrrole chromophore.

The catalysed reaction is ATP + protein L-histidine = ADP + protein N-phospho-L-histidine.. Photoreceptor which exists in two forms that are reversibly interconvertible by light: the R form that absorbs maximally in the red region of the spectrum and the FR form that absorbs maximally in the far-red region. This is Cyanobacterial phytochrome B (bphB) from Nostoc sp. (strain PCC 7120 / SAG 25.82 / UTEX 2576).